Here is a 313-residue protein sequence, read N- to C-terminus: Platelet glycoprotein VI (313 aa).

Residues 1–21 (MSPASPTFFCIGLCVLQVIQT) form the signal peptide. Residues 22–265 (QSGPLPKPSL…FGFAHQHYAK (244 aa)) lie on the Extracellular side of the membrane. Ig-like C2-type domains lie at 27-105 (PKPS…DQLE) and 115-197 (PSLS…APSD). A disulfide bond links C49 and C89. N93 is a glycosylation site (N-linked (GlcNAc...) asparagine). A disulfide bond links C135 and C181. Residues 213–236 (VPTEESFPVTESSRRPSILPTNKI) are disordered. N244 is a glycosylation site (N-linked (GlcNAc...) asparagine). The helical transmembrane segment at 266 to 286 (GNLVRICLGATIIIILLGLLA) threads the bilayer. The Cytoplasmic portion of the chain corresponds to 287–313 (EDWHSRKKCLQHRMRALQRPLPPLPLA).

As to quaternary structure, associated with Fc receptor gamma chain. The GPVI:FcRgamma complex is associated with the Src kinase family FYN and LYN. Interacts with TRAF4. Interacts with COL1A1, but not with COL4A4. In terms of tissue distribution, megakaryocytes and platelets.

The protein resides in the cell membrane. Functionally, collagen receptor involved in collagen-induced platelet adhesion and activation. Plays a key role in platelet procoagulant activity and subsequent thrombin and fibrin formation. This procoagulant function may contribute to arterial and venous thrombus formation. The signaling pathway involves the FcR gamma-chain, the Src kinases (likely FYN or LYN) and SYK, the adapter protein LAT and leads to the activation of PLCG2. This chain is Platelet glycoprotein VI, found in Mus musculus (Mouse).